The sequence spans 719 residues: Protein borderless (719 aa).

The first 33 residues, 1 to 33, serve as a signal peptide directing secretion; the sequence is MPAKRSRTFRQSGSALLALLAIILLMNISCTSA. Over 34 to 650 the chain is Extracellular; it reads ARDHRRQTNL…IDVPSQRKVR (617 aa). Ig-like domains lie at 40–128, 134–241, 246–334, and 341–429; these read QTNL…CQVS, PSVR…AFLN, AKVI…PVIS, and PIFS…AELM. Cystine bridges form between Cys-55-Cys-125, Cys-172-Cys-224, Cys-267-Cys-318, and Cys-363-Cys-413. 2 Fibronectin type-III domains span residues 434 to 527 and 555 to 646; these read APRA…TLPS and APWN…VPSQ. The helical transmembrane segment at 651-671 threads the bilayer; it reads ALIIGSSVGVIFLLCALCAFL. The Cytoplasmic portion of the chain corresponds to 672–719; it reads YVKRSCLRHLFAKDSSASEDEDTAESGDCDSDEQDQRDRDSIKIRQST. The interval 685–719 is disordered; the sequence is DSSASEDEDTAESGDCDSDEQDQRDRDSIKIRQST. Acidic residues predominate over residues 688–704; it reads ASEDEDTAESGDCDSDE. Residues 705-719 are compositionally biased toward basic and acidic residues; sequence QDQRDRDSIKIRQST.

The protein belongs to the immunoglobulin superfamily. As to quaternary structure, interacts with tutl. In the visual system, expressed in lamina and medulla (at protein level).

It localises to the cell membrane. The protein resides in the cell projection. The protein localises to the axon. In terms of biological role, in the developing eye, has a role in axonal targeting of the R7 photoreceptor where it functions together with tutl. Probably mediates homotypic cell adhesion; the effect is inhibited by Lar. This Drosophila melanogaster (Fruit fly) protein is Protein borderless.